A 425-amino-acid chain; its full sequence is Enolase (425 aa).

Q165 provides a ligand contact to (2R)-2-phosphoglycerate. E207 serves as the catalytic Proton donor. Mg(2+)-binding residues include D244, E285, and D312. Positions 337, 366, 367, and 388 each coordinate (2R)-2-phosphoglycerate. K337 functions as the Proton acceptor in the catalytic mechanism.

It belongs to the enolase family. Mg(2+) serves as cofactor.

The protein resides in the cytoplasm. The protein localises to the secreted. It localises to the cell surface. The enzyme catalyses (2R)-2-phosphoglycerate = phosphoenolpyruvate + H2O. It participates in carbohydrate degradation; glycolysis; pyruvate from D-glyceraldehyde 3-phosphate: step 4/5. Its function is as follows. Catalyzes the reversible conversion of 2-phosphoglycerate (2-PG) into phosphoenolpyruvate (PEP). It is essential for the degradation of carbohydrates via glycolysis. The chain is Enolase from Wolbachia sp. subsp. Brugia malayi (strain TRS).